Consider the following 1054-residue polypeptide: DIS3-like exonuclease 1 (1054 aa).

A CSD1 domain is found at 236 to 313 (AGIKSGRYIQ…WKGRTAALCE (78 aa)). The tract at residues 313–332 (ENDSEDKASGESPSEPMPTG) is disordered. Positions 365–431 (ILVTPWDYRI…GEIATILVEN (67 aa)) constitute a CSD2 domain. One can recognise an RNB domain in the interval 465 to 816 (RRDLRSTHLV…VHRLLMAAIS (352 aa)). Ser-989 bears the Phosphoserine mark.

This sequence belongs to the RNR ribonuclease family. In terms of assembly, component of the RNA exosome complex. The catalytically inactive RNA exosome core (Exo-9) complex is believed to associate with catalytic subunits EXOSC10, and DIS3 or DIS3L in cytoplasmic- and nuclear-specific RNA exosome complex forms. Mg(2+) serves as cofactor.

It localises to the cytoplasm. The catalysed reaction is Exonucleolytic cleavage in the 3'- to 5'-direction to yield nucleoside 5'-phosphates.. Catalytic component of the RNA exosome complex which has 3'-&gt;5' exoribonuclease activity and participates in a multitude of cellular RNA processing and degradation events. In the cytoplasm, the RNA exosome complex is involved in general mRNA turnover and specifically degrades inherently unstable mRNAs containing AU-rich elements (AREs) within their 3' untranslated regions, and in RNA surveillance pathways, preventing translation of aberrant mRNAs. It seems to be involved in degradation of histone mRNA. The chain is DIS3-like exonuclease 1 (Dis3l) from Rattus norvegicus (Rat).